A 742-amino-acid chain; its full sequence is Clamp-binding protein CrfC (742 aa).

Residues 41–45 (QLALP) form a clamp-binding consensus region. The 337-residue stretch at 66–402 (SRLEMVLAIV…LWEDSLFAQP (337 aa)) folds into the Dynamin-type G domain. Positions 76–83 (GTMKAGKS) are G1 motif. Residues 102-104 (MTA) form a G2 motif region. The G3 motif stretch occupies residues 236 to 239 (DTPG). Residues 297 to 300 (NKFD) are G4 motif. Residues 331-334 (FPVS) are G5 motif. Residues 440–472 (RAHGLNVACEQLRQNIHQIEESLQLLQLNQAQV) are a coiled coil.

The protein belongs to the TRAFAC class dynamin-like GTPase superfamily. Dynamin/Fzo/YdjA family. As to quaternary structure, forms homooligomers. Binds to the beta sliding clamp processivity factor (DnaN) in the presence and absence of DNA, may bind to the clamp itself as homodimers or trimers. Homooligomers may be able to bind more than 1 clamp complex.

Its subcellular location is the cytoplasm. Its function is as follows. Important for the colocalization of sister nascent DNA strands after replication fork passage during DNA replication, and for positioning and subsequent partitioning of sister chromosomes. Does not have GTPase activity on its own. The polypeptide is Clamp-binding protein CrfC (crfC) (Escherichia coli (strain K12)).